We begin with the raw amino-acid sequence, 353 residues long: Peptide-N(4)-(N-acetyl-beta-glucosaminyl)asparagine amidase (353 aa).

Cys125, Cys128, and Cys159 together coordinate Zn(2+). Cys185 functions as the Nucleophile in the catalytic mechanism. Residues His212 and Asp229 contribute to the active site. Residue Glu232 participates in substrate binding. Residues 316-353 (SLEKTKPSKDTSTTTLTGTKGRESGSTAWKQQRGEDGS) are disordered. The span at 325-334 (DTSTTTLTGT) shows a compositional bias: low complexity.

The protein belongs to the transglutaminase-like superfamily. PNGase family. Zn(2+) is required as a cofactor.

The protein resides in the cytoplasm. It catalyses the reaction Hydrolysis of an N(4)-(acetyl-beta-D-glucosaminyl)asparagine residue in which the glucosamine residue may be further glycosylated, to yield a (substituted) N-acetyl-beta-D-glucosaminylamine and a peptide containing an aspartate residue.. Specifically deglycosylates the denatured form of N-linked glycoproteins in the cytoplasm and assists their proteasome-mediated degradation. Cleaves the beta-aspartyl-glucosamine (GlcNAc) of the glycan and the amide side chain of Asn, converting Asn to Asp. Prefers proteins containing high-mannose over those bearing complex type oligosaccharides. Can recognize misfolded proteins in the endoplasmic reticulum that are exported to the cytosol to be destroyed and deglycosylate them, while it has no activity toward native proteins. Deglycosylation is a prerequisite for subsequent proteasome-mediated degradation of some, but not all, misfolded glycoproteins. The sequence is that of Peptide-N(4)-(N-acetyl-beta-glucosaminyl)asparagine amidase (PNG1) from Kluyveromyces lactis (strain ATCC 8585 / CBS 2359 / DSM 70799 / NBRC 1267 / NRRL Y-1140 / WM37) (Yeast).